The following is a 196-amino-acid chain: Adenosylcobinamide-phosphate guanylyltransferase (196 aa).

Homodimer.

The enzyme catalyses adenosylcob(III)inamide phosphate + GTP + H(+) = adenosylcob(III)inamide-GDP + diphosphate. Its pathway is cofactor biosynthesis; adenosylcobalamin biosynthesis. Functionally, guanylyltransferase that catalyzes the synthesis of adenosylcobinamide-GDP (AdoCbi-GDP) from adenosylcobinamide-phosphate (AdoCbi-P) and GTP. Is involved in adenosylcobalamin biosynthesis. Binds one GTP per dimer. Cannot use other NTPs or GDP. Does not display AdoCbi kinase activity. Is also able to catalyze the condensation of 2-phospho-L-lactate (LP) with GTP in vitro to form PPi and (2S)-lactyl-2-diphospho-5'-guanosine (LPPG), but is much less efficient than CofC, the presumed enzyme catalyzing this reaction in vivo. The polypeptide is Adenosylcobinamide-phosphate guanylyltransferase (cobY) (Methanocaldococcus jannaschii (strain ATCC 43067 / DSM 2661 / JAL-1 / JCM 10045 / NBRC 100440) (Methanococcus jannaschii)).